The sequence spans 171 residues: Large ribosomal subunit protein uL10 (171 aa).

This sequence belongs to the universal ribosomal protein uL10 family. Part of the ribosomal stalk of the 50S ribosomal subunit. The N-terminus interacts with L11 and the large rRNA to form the base of the stalk. The C-terminus forms an elongated spine to which L12 dimers bind in a sequential fashion forming a multimeric L10(L12)X complex.

Forms part of the ribosomal stalk, playing a central role in the interaction of the ribosome with GTP-bound translation factors. In Hyphomonas neptunium (strain ATCC 15444), this protein is Large ribosomal subunit protein uL10.